Reading from the N-terminus, the 540-residue chain is 2-isopropylmalate synthase (540 aa).

One can recognise a Pyruvate carboxyltransferase domain in the interval 8–269 (VLIFDTTLRD…YFNPFFGREP (262 aa)). Mn(2+)-binding residues include Asp17, His208, His210, and Asn244. Residues 408–540 (QLRLVQVSCG…AVLADLRSGI (133 aa)) are regulatory domain.

This sequence belongs to the alpha-IPM synthase/homocitrate synthase family. LeuA type 1 subfamily. As to quaternary structure, homodimer. Mn(2+) is required as a cofactor.

The protein localises to the cytoplasm. It carries out the reaction 3-methyl-2-oxobutanoate + acetyl-CoA + H2O = (2S)-2-isopropylmalate + CoA + H(+). Its pathway is amino-acid biosynthesis; L-leucine biosynthesis; L-leucine from 3-methyl-2-oxobutanoate: step 1/4. In terms of biological role, catalyzes the condensation of the acetyl group of acetyl-CoA with 3-methyl-2-oxobutanoate (2-ketoisovalerate) to form 3-carboxy-3-hydroxy-4-methylpentanoate (2-isopropylmalate). This Prochlorococcus marinus (strain MIT 9313) protein is 2-isopropylmalate synthase.